Consider the following 287-residue polypeptide: Damage-control phosphatase PH1575 (287 aa).

Residues 7–10 (CLTC) carry the Subfamily I CxxC motif motif. Asp156, Asn157, and Asp191 together coordinate Mn(2+). A Subfamily I GNFE motif motif is present at residues 243 to 246 (GNFE). The short motif at 263 to 264 (KC) is the Subfamily I KC motif element.

Belongs to the damage-control phosphatase family. Nucleotides phosphatase I subfamily. Mn(2+) is required as a cofactor. Ni(2+) serves as cofactor. Requires [2Fe-2S] cluster as cofactor.

Its activity is regulated as follows. Activity is strongly promoted by Co(2+), Ni(2+), Mg(2+), Mn(2+), Ca(2+), Zn(2+) and Cu(2+). Activity is inhibited by EDTA. Metal-dependent phosphatase with probable damage-control functions. Shows phosphatase activity against p-nitrophenyl phosphate (pNPP), but natural substrates have not been identified yet. Low phosphatase activity against 8-oxo nucleotides suggests that it could hydrolyze oxidatively damaged purine nucleotides or their biosynthetic intermediates. The chain is Damage-control phosphatase PH1575 from Pyrococcus horikoshii (strain ATCC 700860 / DSM 12428 / JCM 9974 / NBRC 100139 / OT-3).